The following is a 355-amino-acid chain: Tabersonine 16-O-methyltransferase (355 aa).

S-adenosyl-L-methionine-binding positions include 198-201, D222, 222-223, 242-243, and K256; these read IGGG, DL, and DM. The active-site Proton acceptor is the H260.

This sequence belongs to the class I-like SAM-binding methyltransferase superfamily. Cation-independent O-methyltransferase family. COMT subfamily. In terms of assembly, homodimer. Expressed in leaves and flowers. Detected in stems and roots. In leaves, expressed in epidermal cells.

The protein localises to the cytoplasm. The enzyme catalyses 16-hydroxytabersonine + S-adenosyl-L-methionine = 16-methoxytabersonine + S-adenosyl-L-homocysteine + H(+). It functions in the pathway alkaloid biosynthesis; vindoline biosynthesis. Functionally, 16-O-methyltransferase involved in the biosynthesis of vindoline. Highly specific for 16-hydroxytabersonine. No activity with tabersonine, 3-hydroxytyramine, 4-hydroxytyramine, 5-hydroxytryptamine (5HT), 2,3-dihydro-3-hydroxytabersonine, lochnericine, hoerhammericine, 16-hydroxy-2,3-dihydro-3-hydroxytabersonine, 16-hydroxylochnericine, 16-hydroxyhoerhammericine, quercetin, kaempferol and caffeic acid as substrates. The polypeptide is Tabersonine 16-O-methyltransferase (Catharanthus roseus (Madagascar periwinkle)).